The sequence spans 160 residues: MSVLKKPDLTDPVLLEKLAQNMGHNYYGEPAWPNDLLYTFPVVILGTLACVVGLAVLDPAMVGEPANPFATPLEILPEWYLYPAFQILRVVPNKLLGILLQTAIPLGLMLVPFIENINKFQNPFRRPIAMAVFLFGTLVTLWMGVAATLPIDKFFTLGLF.

3 helical membrane passes run 36 to 56 (LLYT…GLAV), 95 to 115 (LLGI…PFIE), and 127 to 147 (PIAM…GVAA).

It belongs to the cytochrome b family. PetD subfamily. The 4 large subunits of the cytochrome b6-f complex are cytochrome b6, subunit IV (17 kDa polypeptide, PetD), cytochrome f and the Rieske protein, while the 4 small subunits are PetG, PetL, PetM and PetN. The complex functions as a dimer.

The protein resides in the cellular thylakoid membrane. Component of the cytochrome b6-f complex, which mediates electron transfer between photosystem II (PSII) and photosystem I (PSI), cyclic electron flow around PSI, and state transitions. The protein is Cytochrome b6-f complex subunit 4 of Prochlorothrix hollandica.